The following is a 236-amino-acid chain: Auxin-responsive protein IAA16 (236 aa).

The short motif at Leu-9–Leu-13 is the EAR-like (transcriptional repression) element. The tract at residues Lys-82 to Ser-110 is disordered. Residues Met-85–Asp-94 are compositionally biased toward polar residues. Residues Val-118–Gly-218 enclose the PB1 domain.

The protein belongs to the Aux/IAA family. In terms of assembly, homodimers and heterodimers.

The protein resides in the nucleus. Aux/IAA proteins are short-lived transcriptional factors that function as repressors of early auxin response genes at low auxin concentrations. Repression is thought to result from the interaction with auxin response factors (ARFs), proteins that bind to the auxin-responsive promoter element (AuxRE). Formation of heterodimers with ARF proteins may alter their ability to modulate early auxin response genes expression. This chain is Auxin-responsive protein IAA16 (IAA16), found in Arabidopsis thaliana (Mouse-ear cress).